The following is a 151-amino-acid chain: tRNA-specific adenosine deaminase (151 aa).

The CMP/dCMP-type deaminase domain maps to 1 to 111 (MGKEYFLKVA…LDKKHGGVVS (111 aa)). Residue His52 participates in Zn(2+) binding. The Proton donor role is filled by Glu54. The Zn(2+) site is built by Cys82 and Cys85.

Belongs to the cytidine and deoxycytidylate deaminase family. As to quaternary structure, homodimer. The cofactor is Zn(2+).

The catalysed reaction is adenosine(34) in tRNA + H2O + H(+) = inosine(34) in tRNA + NH4(+). In terms of biological role, catalyzes the deamination of adenosine to inosine at the wobble position 34 of tRNA(Arg2). This is tRNA-specific adenosine deaminase from Aquifex aeolicus (strain VF5).